The sequence spans 592 residues: Inactive glycosyltransferase 25 family member 3 (592 aa).

An N-terminal signal peptide occupies residues 1-19 (MHVARLLPLLLLLGQQLRA). Residues Asn72, Asn150, Asn234, and Asn357 are each glycosylated (N-linked (GlcNAc...) asparagine). A disordered region spans residues 540–592 (AEWLSDTETSSPWDDDSGRLISQTGSQKALRGPHLHLTGSSGHSLHPHHRDEL). The Prevents secretion from ER motif lies at 589–592 (RDEL).

It belongs to the glycosyltransferase 25 family.

It is found in the endoplasmic reticulum lumen. Functionally, probable cell adhesion protein involved in leukocyte transmigration across the blood-brain barrier. Does not express any beta-galactosyltransferase activity in vitro. In Mus musculus (Mouse), this protein is Inactive glycosyltransferase 25 family member 3 (Cercam).